We begin with the raw amino-acid sequence, 726 residues long: MSTESERIESVSEANASSLEVGNDQMSEALAGQAQELKTIGDDKEGCGNFASAGDNGMEKVNGFTNLVKETESVNGELDLGTRTENVGGESNQSDKKVLVDSEEVMMVEKRGLLVEKEVEPDMVCSHGADLSDVKVSDGRLDSEDLVQDRKPDGLEKQGTKVEDLDVVCFMGLEPHESKDESILDDEIAHVAAKVKISDSDLVWAKVRSHPWWPGQVFDASAATDKAKKHFKKGSFLVTYFGDCTFAWNEASRIKPFRQHFSQMAKQSSLPDFIDAIDFALEEVSRRIEFGLACSCISEEVYQKIKTQNVINPGIREDSSSIHGGDKVSSAVFFEPANLVGYVKRLACSPSYDATDALQLVSQRAQLLAFNRWKGYTDLPEFMTLQGSVESAPKISPAEEQSSLVEVSDPEPTKSKQVYTKRRKTNLQTEQSSLVEVSDPDKGDCKHDGVFEYEETIVPKKKEKTLAEFIAEKRVSRHNGNTSHEKSGNVPHCEKKRKVVQSKVPKSTKKIKANLQTEDPGSPVSPKNDRKNNLSAGDKITPQKARKSFGIGASILKVANQMHCSTPTRLLPCSDSTSKKAAKSNGSGKSLQEKPKAEALSAREISPSTTLSSPHAASVTKTTSGKSNSVSLDHNLSGELDQVRKEAPSTNLVEDPMLESRDLKDSSKEQVVHEDKKEAANVADEKSIMDSNLTGEKISGLDLREQPSNKNCSGGSDSCKEDVSAE.

Positions 1-10 are enriched in basic and acidic residues; it reads MSTESERIES. Residues 1-26 are disordered; it reads MSTESERIESVSEANASSLEVGNDQM. A compositionally biased stretch (polar residues) spans 12–26; sequence SEANASSLEVGNDQM. The PWWP domain occupies 199 to 260; the sequence is DSDLVWAKVR…ASRIKPFRQH (62 aa). Residues 392–441 are disordered; sequence APKISPAEEQSSLVEVSDPEPTKSKQVYTKRRKTNLQTEQSSLVEVSDPD. The segment covering 426-435 has biased composition (polar residues); that stretch reads NLQTEQSSLV. 2 short sequence motifs (nuclear localization signal) span residues 460 to 467 and 495 to 502; these read KKKEKTLA and KKRKVVQS. Disordered regions lie at residues 472-545 and 568-726; these read EKRV…PQKA and TRLL…VSAE. Over residues 494-512 the composition is skewed to basic residues; it reads EKKRKVVQSKVPKSTKKIK. The segment covering 606 to 634 has biased composition (polar residues); it reads SPSTTLSSPHAASVTKTTSGKSNSVSLDH. Positions 658-688 are enriched in basic and acidic residues; it reads LESRDLKDSSKEQVVHEDKKEAANVADEKSI.

The protein belongs to the PDP family. In terms of assembly, interacts with DEK3. Binds to MSI4/FVE and MSI5. Component of the PRC2 (polycomb repressive complex 2) complex which regulates histone methylation on histone H3K27.

It localises to the nucleus. Functionally, together with PDP1, PDP3 and PDP6, interacts with MSI4/FVE and MSI5 to suppress FLC, MAF4 and MAF5 expression by regulating the function of the PRC2 complex and modulating H3K27me3 level, thereby promoting flowering. The polypeptide is PWWP domain-containing protein 2 (Arabidopsis thaliana (Mouse-ear cress)).